We begin with the raw amino-acid sequence, 99 residues long: Putative membrane protein insertion efficiency factor (99 aa).

Belongs to the UPF0161 family.

Its subcellular location is the cell membrane. Functionally, could be involved in insertion of integral membrane proteins into the membrane. This Levilactobacillus brevis (strain ATCC 367 / BCRC 12310 / CIP 105137 / JCM 1170 / LMG 11437 / NCIMB 947 / NCTC 947) (Lactobacillus brevis) protein is Putative membrane protein insertion efficiency factor.